The following is a 306-amino-acid chain: UDP-3-O-acyl-N-acetylglucosamine deacetylase (306 aa).

The Zn(2+) site is built by histidine 79, histidine 238, and aspartate 242. Histidine 265 functions as the Proton donor in the catalytic mechanism.

The protein belongs to the LpxC family. The cofactor is Zn(2+).

The enzyme catalyses a UDP-3-O-[(3R)-3-hydroxyacyl]-N-acetyl-alpha-D-glucosamine + H2O = a UDP-3-O-[(3R)-3-hydroxyacyl]-alpha-D-glucosamine + acetate. The protein operates within glycolipid biosynthesis; lipid IV(A) biosynthesis; lipid IV(A) from (3R)-3-hydroxytetradecanoyl-[acyl-carrier-protein] and UDP-N-acetyl-alpha-D-glucosamine: step 2/6. Its function is as follows. Catalyzes the hydrolysis of UDP-3-O-myristoyl-N-acetylglucosamine to form UDP-3-O-myristoylglucosamine and acetate, the committed step in lipid A biosynthesis. This is UDP-3-O-acyl-N-acetylglucosamine deacetylase from Shewanella sp. (strain W3-18-1).